We begin with the raw amino-acid sequence, 219 residues long: Probable GTP-binding protein EngB (219 aa).

An EngB-type G domain is found at 31–205 (VGVEIAFAGR…LSILNEWCHP (175 aa)). Residues 39–46 (GRSNAGKS), 66–70 (GRTQL), 84–87 (DLPG), 151–154 (TKSD), and 184–186 (FSS) contribute to the GTP site. Mg(2+) is bound by residues serine 46 and threonine 68.

The protein belongs to the TRAFAC class TrmE-Era-EngA-EngB-Septin-like GTPase superfamily. EngB GTPase family. Requires Mg(2+) as cofactor.

Necessary for normal cell division and for the maintenance of normal septation. In Shewanella denitrificans (strain OS217 / ATCC BAA-1090 / DSM 15013), this protein is Probable GTP-binding protein EngB.